The chain runs to 362 residues: Protein mom-2 (362 aa).

Residues M1–A24 form the signal peptide. Intrachain disulfides connect C80–C91, C129–C137, C139–C167, C217–C231, and C219–C226. Residue N90 is glycosylated (N-linked (GlcNAc...) asparagine). A lipid anchor (O-palmitoleoyl serine; by mom-1) is attached at S223. The interval T263–N282 is disordered. Positions R265 to G274 are enriched in low complexity. 6 disulfides stabilise this stretch: C304/C322, C313/C317, C321/C361, C337/C352, C339/C349, and C344/C345.

This sequence belongs to the Wnt family. Post-translationally, palmitoleoylation is required for efficient binding to frizzled receptors. Depalmitoleoylation leads to Wnt signaling pathway inhibition. In terms of tissue distribution, expressed by anchor cell and vulva precursor cell descendants P5.ppa, P5.ppp, P7.paa and P7.pap. Expressed in the tail and weakly expressed in the vulva and body wall muscles.

The protein resides in the secreted. It localises to the extracellular space. It is found in the extracellular matrix. Ligand for members of the frizzled family of seven transmembrane receptors. Required in embryonic development for endoderm specification and the correct positioning and orientation of the mitotic spindles and division planes in blastomere cells. Involved in cleavage axis determination. Binds to receptor tyrosine kinase cam-1. Together with wnt ligand lin-44, plays a role in controlling vulva precursor cell P7.p lineage orientation during vulva development, probably by acting as a ligand for tyrosine kinase receptor lin-18. May act redundantly with other Wnt ligands such as cwn-1 and cwn-2 to control seam cell polarity. The chain is Protein mom-2 (mom-2) from Caenorhabditis elegans.